The primary structure comprises 62 residues: DNA-directed RNA polymerase subunit omega (62 aa).

It belongs to the RNA polymerase subunit omega family. As to quaternary structure, the RNAP catalytic core consists of 2 alpha, 1 beta, 1 beta' and 1 omega subunit. When a sigma factor is associated with the core the holoenzyme is formed, which can initiate transcription.

The catalysed reaction is RNA(n) + a ribonucleoside 5'-triphosphate = RNA(n+1) + diphosphate. Its function is as follows. Promotes RNA polymerase assembly. Latches the N- and C-terminal regions of the beta' subunit thereby facilitating its interaction with the beta and alpha subunits. The protein is DNA-directed RNA polymerase subunit omega of Wigglesworthia glossinidia brevipalpis.